Here is a 60-residue protein sequence, read N- to C-terminus: Putative insect toxin Acra6 (60 aa).

The 59-residue stretch at 2-60 (RDGYIRRKDEFKFKCYVDGKDCDDVCKSEGGSAGYCTALGFLCYCAGLPDDKAWKPTSS) folds into the LCN-type CS-alpha/beta domain. Disulfide bonds link C16–C37, C23–C44, and C27–C46.

The protein belongs to the long (4 C-C) scorpion toxin superfamily. Sodium channel inhibitor family. Beta subfamily. In terms of tissue distribution, expressed by the venom gland.

It is found in the secreted. Depressant insect toxins cause a transient contraction paralysis followed by a slow flaccid paralysis. They bind voltage-independently to sodium channels (Nav) and block action potentials, primarily by depolarizing the axonal membrane and suppressing the sodium current. The protein is Putative insect toxin Acra6 of Androctonus crassicauda (Arabian fat-tailed scorpion).